The sequence spans 231 residues: ATP-dependent dethiobiotin synthetase BioD (231 aa).

12 to 17 (EVGKTV) is a binding site for ATP. Threonine 16 is a binding site for Mg(2+). Lysine 37 is a catalytic residue. Serine 41 contributes to the substrate binding site. ATP-binding positions include aspartate 51, 112-115 (EGAG), and 202-204 (PKL). Residues aspartate 51 and glutamate 112 each contribute to the Mg(2+) site.

The protein belongs to the dethiobiotin synthetase family. Homodimer. The cofactor is Mg(2+).

It localises to the cytoplasm. It catalyses the reaction (7R,8S)-7,8-diammoniononanoate + CO2 + ATP = (4R,5S)-dethiobiotin + ADP + phosphate + 3 H(+). It participates in cofactor biosynthesis; biotin biosynthesis; biotin from 7,8-diaminononanoate: step 1/2. In terms of biological role, catalyzes a mechanistically unusual reaction, the ATP-dependent insertion of CO2 between the N7 and N8 nitrogen atoms of 7,8-diaminopelargonic acid (DAPA, also called 7,8-diammoniononanoate) to form a ureido ring. The chain is ATP-dependent dethiobiotin synthetase BioD from Bacillus subtilis (strain 168).